We begin with the raw amino-acid sequence, 296 residues long: Phosphatidylglycerol--prolipoprotein diacylglyceryl transferase (296 aa).

Helical transmembrane passes span 10 to 30 (IAFS…LAAF), 57 to 77 (LLFY…MLFY), 92 to 112 (VWEG…ACWL), and 119 to 139 (LHFF…LGFG). Arg140 contacts a 1,2-diacyl-sn-glycero-3-phospho-(1'-sn-glycerol). Helical transmembrane passes span 194–214 (QLYE…TFSM), 220–240 (YALS…VEFV), and 254–274 (WLTM…ALLA).

This sequence belongs to the Lgt family.

It is found in the cell inner membrane. It carries out the reaction L-cysteinyl-[prolipoprotein] + a 1,2-diacyl-sn-glycero-3-phospho-(1'-sn-glycerol) = an S-1,2-diacyl-sn-glyceryl-L-cysteinyl-[prolipoprotein] + sn-glycerol 1-phosphate + H(+). Its pathway is protein modification; lipoprotein biosynthesis (diacylglyceryl transfer). Its function is as follows. Catalyzes the transfer of the diacylglyceryl group from phosphatidylglycerol to the sulfhydryl group of the N-terminal cysteine of a prolipoprotein, the first step in the formation of mature lipoproteins. This Xanthomonas oryzae pv. oryzae (strain MAFF 311018) protein is Phosphatidylglycerol--prolipoprotein diacylglyceryl transferase.